The chain runs to 220 residues: Small ribosomal subunit protein uS3 (220 aa).

Residues 38 to 106 (IRKYVKGRLK…RVHININEIK (69 aa)) enclose the KH type-2 domain.

This sequence belongs to the universal ribosomal protein uS3 family. Part of the 30S ribosomal subunit. Forms a tight complex with proteins S10 and S14.

In terms of biological role, binds the lower part of the 30S subunit head. Binds mRNA in the 70S ribosome, positioning it for translation. This is Small ribosomal subunit protein uS3 from Brevibacillus brevis (strain 47 / JCM 6285 / NBRC 100599).